The primary structure comprises 394 residues: Small ribosomal subunit protein uS2m (394 aa).

A mitochondrion-targeting transit peptide spans methionine 1 to phenylalanine 25.

This sequence belongs to the universal ribosomal protein uS2 family. As to quaternary structure, component of the mitochondrial small ribosomal subunit (mt-SSU). Mature yeast 74S mitochondrial ribosomes consist of a small (37S) and a large (54S) subunit. The 37S small subunit contains a 15S ribosomal RNA (15S mt-rRNA) and 34 different proteins. The 54S large subunit contains a 21S rRNA (21S mt-rRNA) and 46 different proteins.

It is found in the mitochondrion. Its function is as follows. Component of the mitochondrial ribosome (mitoribosome), a dedicated translation machinery responsible for the synthesis of mitochondrial genome-encoded proteins, including at least some of the essential transmembrane subunits of the mitochondrial respiratory chain. The mitoribosomes are attached to the mitochondrial inner membrane and translation products are cotranslationally integrated into the membrane. This chain is Small ribosomal subunit protein uS2m (MRP4), found in Saccharomyces cerevisiae (strain ATCC 204508 / S288c) (Baker's yeast).